A 397-amino-acid polypeptide reads, in one-letter code: Tryptophan synthase beta chain (397 aa).

Lys86 is subject to N6-(pyridoxal phosphate)lysine.

The protein belongs to the TrpB family. Tetramer of two alpha and two beta chains. The cofactor is pyridoxal 5'-phosphate.

The catalysed reaction is (1S,2R)-1-C-(indol-3-yl)glycerol 3-phosphate + L-serine = D-glyceraldehyde 3-phosphate + L-tryptophan + H2O. The protein operates within amino-acid biosynthesis; L-tryptophan biosynthesis; L-tryptophan from chorismate: step 5/5. Its function is as follows. The beta subunit is responsible for the synthesis of L-tryptophan from indole and L-serine. The polypeptide is Tryptophan synthase beta chain (Edwardsiella ictaluri (strain 93-146)).